The sequence spans 253 residues: 5-oxoprolinase subunit A (253 aa).

It belongs to the LamB/PxpA family. In terms of assembly, forms a complex composed of PxpA, PxpB and PxpC.

It catalyses the reaction 5-oxo-L-proline + ATP + 2 H2O = L-glutamate + ADP + phosphate + H(+). In terms of biological role, catalyzes the cleavage of 5-oxoproline to form L-glutamate coupled to the hydrolysis of ATP to ADP and inorganic phosphate. The protein is 5-oxoprolinase subunit A of Bacillus licheniformis (strain ATCC 14580 / DSM 13 / JCM 2505 / CCUG 7422 / NBRC 12200 / NCIMB 9375 / NCTC 10341 / NRRL NRS-1264 / Gibson 46).